A 419-amino-acid polypeptide reads, in one-letter code: Glutamyl-tRNA reductase (419 aa).

Residues 49-52 (TCNR), S107, 112-114 (EPQ), and Q118 contribute to the substrate site. Catalysis depends on C50, which acts as the Nucleophile. 187–192 (GAGETI) contributes to the NADP(+) binding site.

Belongs to the glutamyl-tRNA reductase family. In terms of assembly, homodimer.

It carries out the reaction (S)-4-amino-5-oxopentanoate + tRNA(Glu) + NADP(+) = L-glutamyl-tRNA(Glu) + NADPH + H(+). It participates in porphyrin-containing compound metabolism; protoporphyrin-IX biosynthesis; 5-aminolevulinate from L-glutamyl-tRNA(Glu): step 1/2. In terms of biological role, catalyzes the NADPH-dependent reduction of glutamyl-tRNA(Glu) to glutamate 1-semialdehyde (GSA). This Vibrio atlanticus (strain LGP32) (Vibrio splendidus (strain Mel32)) protein is Glutamyl-tRNA reductase.